The chain runs to 571 residues: Cationic amino acid transporter 8 (571 aa).

N35 carries an N-linked (GlcNAc...) asparagine glycan. A run of 6 helical transmembrane segments spans residues 39-59 (FWLLVIIVIYTATSACIYFDW), 94-114 (SLYPITLAIHFTMSVFCGFLY), 117-137 (IGPKFTAIIGQMCNIMSWVFL), 148-168 (FLSFVFLGLGADTAFIPILTI), 177-197 (TFILTVVGAAASLSYAVPATL), and 217-237 (IFLILVPCLLVATFLLPLMPF). 3 N-linked (GlcNAc...) asparagine glycosylation sites follow: N298, N325, and N346. Residues 365–385 (LFFKVLLSYPSICIIVYFILF) traverse the membrane as a helical segment. Residue N386 is glycosylated (N-linked (GlcNAc...) asparagine). 5 helical membrane-spanning segments follow: residues 405-425 (SIINIINILMPISCIPCIIFG), 433-453 (SAIIIILMNAFSALMHLTALI), 461-481 (VSAFLYMCVTSIYTSQIYCFI), 488-508 (VVFGKLLGFASLCGGLFSLLC), and 528-548 (VVLLLVIAFILMFLPLTVLYF).

The protein belongs to the SLC43A transporter (TC 2.A.1.44) family.

It localises to the membrane. The catalysed reaction is L-arginine(in) = L-arginine(out). Sodium-independent cationic amino acid transporter. Transports L-arginine, L-lysine, L-histidine and L-ornithine. This is Cationic amino acid transporter 8 from Plasmodium vivax (strain Salvador I).